The primary structure comprises 28 residues: Conotoxin Cal6.43b (28 aa).

Intrachain disulfides connect Cys-3-Cys-13, Cys-7-Cys-19, and Cys-12-Cys-25.

Expressed by the venom duct.

Its subcellular location is the secreted. In terms of biological role, probable neurotoxin with unknown target. Possibly targets ion channels. The polypeptide is Conotoxin Cal6.43b (Californiconus californicus (California cone)).